The sequence spans 187 residues: uncharacterized protein (187 aa).

The first 17 residues, 1–17, serve as a signal peptide directing secretion; sequence MYAGGRVVRSAFARGKV. C18 carries the N-palmitoyl cysteine lipid modification. The S-diacylglycerol cysteine moiety is linked to residue C18.

Its subcellular location is the cell membrane. This is an uncharacterized protein from Treponema pallidum (strain Nichols).